A 236-amino-acid chain; its full sequence is 2-phospho-L-lactate guanylyltransferase (236 aa).

The protein belongs to the CofC family. As to quaternary structure, homodimer.

It catalyses the reaction (2S)-2-phospholactate + GTP + H(+) = (2S)-lactyl-2-diphospho-5'-guanosine + diphosphate. It participates in cofactor biosynthesis; coenzyme F420 biosynthesis. Guanylyltransferase that catalyzes the activation of (2S)-2-phospholactate (2-PL) as (2S)-lactyl-2-diphospho-5'-guanosine, via the condensation of 2-PL with GTP. It is involved in the biosynthesis of coenzyme F420, a hydride carrier cofactor. This Natrialba magadii (strain ATCC 43099 / DSM 3394 / CCM 3739 / CIP 104546 / IAM 13178 / JCM 8861 / NBRC 102185 / NCIMB 2190 / MS3) (Natronobacterium magadii) protein is 2-phospho-L-lactate guanylyltransferase.